Here is a 189-residue protein sequence, read N- to C-terminus: Flavin prenyltransferase UbiX (189 aa).

Residues 11-13 (GAS), Ser-37, 88-91 (SMRT), and Arg-123 each bind FMN. Tyr-153 is a binding site for dimethylallyl phosphate.

The protein belongs to the UbiX/PAD1 family.

The enzyme catalyses dimethylallyl phosphate + FMNH2 = prenylated FMNH2 + phosphate. In terms of biological role, flavin prenyltransferase that catalyzes the synthesis of the prenylated FMN cofactor (prenyl-FMN) for 4-hydroxy-3-polyprenylbenzoic acid decarboxylase UbiD. The prenyltransferase is metal-independent and links a dimethylallyl moiety from dimethylallyl monophosphate (DMAP) to the flavin N5 and C6 atoms of FMN. The chain is Flavin prenyltransferase UbiX from Neisseria meningitidis serogroup B (strain ATCC BAA-335 / MC58).